The sequence spans 156 residues: Small ribosomal subunit protein uS7 (156 aa).

The protein belongs to the universal ribosomal protein uS7 family. Part of the 30S ribosomal subunit. Contacts proteins S9 and S11.

One of the primary rRNA binding proteins, it binds directly to 16S rRNA where it nucleates assembly of the head domain of the 30S subunit. Is located at the subunit interface close to the decoding center, probably blocks exit of the E-site tRNA. The protein is Small ribosomal subunit protein uS7 of Arthrospira platensis (Spirulina platensis).